The primary structure comprises 485 residues: Alginate biosynthesis protein AlgA (485 aa).

It belongs to the mannose-6-phosphate isomerase type 2 family. Monomer. Requires Co(2+) as cofactor.

The enzyme catalyses D-mannose 6-phosphate = D-fructose 6-phosphate. It catalyses the reaction alpha-D-mannose 1-phosphate + GTP + H(+) = GDP-alpha-D-mannose + diphosphate. The protein operates within nucleotide-sugar biosynthesis; GDP-alpha-D-mannose biosynthesis; GDP-alpha-D-mannose from alpha-D-mannose 1-phosphate (GTP route): step 1/1. It participates in nucleotide-sugar biosynthesis; GDP-alpha-D-mannose biosynthesis; alpha-D-mannose 1-phosphate from D-fructose 6-phosphate: step 1/2. Produces a precursor for alginate polymerization. The alginate layer provides a protective barrier against host immune defenses and antibiotics. In Pseudomonas putida (strain ATCC 47054 / DSM 6125 / CFBP 8728 / NCIMB 11950 / KT2440), this protein is Alginate biosynthesis protein AlgA (algA).